Reading from the N-terminus, the 338-residue chain is Large ribosomal subunit protein uL3 (338 aa).

Positions 228-237 are enriched in basic residues; the sequence is HKHRKGHRRT. The tract at residues 228-255 is disordered; the sequence is HKHRKGHRRTGTIGPQAPALMFTQPRPG.

Belongs to the universal ribosomal protein uL3 family. In terms of assembly, part of the 50S ribosomal subunit. Forms a cluster with proteins L14 and L24e.

Functionally, one of the primary rRNA binding proteins, it binds directly near the 3'-end of the 23S rRNA, where it nucleates assembly of the 50S subunit. The chain is Large ribosomal subunit protein uL3 from Pyrobaculum calidifontis (strain DSM 21063 / JCM 11548 / VA1).